A 471-amino-acid chain; its full sequence is UDP-N-acetylmuramoylalanine--D-glutamate ligase (471 aa).

Position 122–128 (122–128) interacts with ATP; it reads GTNGKTT.

This sequence belongs to the MurCDEF family.

The protein localises to the cytoplasm. The enzyme catalyses UDP-N-acetyl-alpha-D-muramoyl-L-alanine + D-glutamate + ATP = UDP-N-acetyl-alpha-D-muramoyl-L-alanyl-D-glutamate + ADP + phosphate + H(+). It functions in the pathway cell wall biogenesis; peptidoglycan biosynthesis. Its function is as follows. Cell wall formation. Catalyzes the addition of glutamate to the nucleotide precursor UDP-N-acetylmuramoyl-L-alanine (UMA). The sequence is that of UDP-N-acetylmuramoylalanine--D-glutamate ligase from Streptomyces coelicolor (strain ATCC BAA-471 / A3(2) / M145).